The chain runs to 509 residues: Putative ATP-dependent RNA helicase QP509L (509 aa).

Residues 110–262 (KKLLSPYGRF…KIIIHHLGQP (153 aa)) enclose the Helicase ATP-binding domain. Residue 123 to 130 (LNTGLGKT) participates in ATP binding. Residues 215-218 (DEAH) carry the DEAH box motif.

The protein belongs to the DEAD box helicase family. DEAH subfamily.

It catalyses the reaction ATP + H2O = ADP + phosphate + H(+). The polypeptide is Putative ATP-dependent RNA helicase QP509L (African swine fever virus (strain Badajoz 1971 Vero-adapted) (Ba71V)).